Consider the following 386-residue polypeptide: MSAVMITRKITRKWEKLPGKNTFCCDGRVMMARQKGVFYLTLFLIVGTCSLFFAFECPYLAVHLSPAIPVFAVLLFVFVMAMLLRTSFSDPGVLPRALPEEANFIEMEIEAANGNVLAGQRPPPRIKNVQINNQIVKLKYCYTCKIFRPPRASHCSICDNCVDRFDHHCPWVGNCVGKRNYRYFYLFTLSLSLLTIYIFAFDIVHVVLRSVDSGFVNTLKETPGTVLEVLVCFFTLWSVVGLTGFHTYLISLNQTTNEDIKGSWSGKNRVQNPYSHKNIIKNCCEVLCGPTYPSVLDRRGLMLEDSCSSAPSNGATTVPVNKSSNPATQTTKSSAPLIPNEHTPDEAKPSICSGTQKSSSSPKEEKPSSPISPNAVAPAVIKESTH.

Residues methionine 1–lysine 35 lie on the Cytoplasmic side of the membrane. Residues glycine 36–glutamate 56 traverse the membrane as a helical segment. Over cysteine 57 to histidine 63 the chain is Lumenal. A helical membrane pass occupies residues leucine 64–leucine 84. The Cytoplasmic portion of the chain corresponds to arginine 85–tyrosine 183. Positions lysine 139–leucine 189 constitute a DHHC domain. Cysteine 169 (S-palmitoyl cysteine intermediate) is an active-site residue. The helical transmembrane segment at phenylalanine 184 to valine 204 threads the bilayer. At histidine 205–glycine 224 the chain is on the lumenal side. A helical membrane pass occupies residues threonine 225–phenylalanine 245. The Cytoplasmic portion of the chain corresponds to histidine 246 to histidine 386. The span at serine 306–serine 334 shows a compositional bias: polar residues. The interval serine 306–histidine 386 is disordered.

The protein belongs to the DHHC palmitoyltransferase family. ERF2/ZDHHC9 subfamily.

Its subcellular location is the endoplasmic reticulum membrane. The protein resides in the golgi apparatus membrane. The enzyme catalyses L-cysteinyl-[protein] + hexadecanoyl-CoA = S-hexadecanoyl-L-cysteinyl-[protein] + CoA. In terms of biological role, palmitoyltransferase that catalyzes the addition of palmitate onto various protein substrates, such as ADRB2, GSDMD, HRAS, NRAS and CGAS. The protein is Palmitoyltransferase ZDHHC9 of Danio rerio (Zebrafish).